Here is a 634-residue protein sequence, read N- to C-terminus: Extracellular metalloproteinase mep (634 aa).

A signal peptide spans 1 to 18 (MRGLLLAGALALPASVFA). Positions 19 to 245 (HPAHQSYGLN…IHGVVDYVAE (227 aa)) are excised as a propeptide. Asparagine 286 is a glycosylation site (N-linked (GlcNAc...) asparagine). Zn(2+) is bound at residue histidine 429. Glutamate 430 is an active-site residue. A Zn(2+)-binding site is contributed by histidine 433.

The protein belongs to the peptidase M36 family. Zn(2+) is required as a cofactor.

Its subcellular location is the secreted. Its function is as follows. Secreted metalloproteinase that allows assimilation of proteinaceous substrates and probably acts as a virulence factor. The sequence is that of Extracellular metalloproteinase mep (mep) from Aspergillus fumigatus (strain CBS 144.89 / FGSC A1163 / CEA10) (Neosartorya fumigata).